A 314-amino-acid polypeptide reads, in one-letter code: Aspartate carbamoyltransferase catalytic subunit (314 aa).

Carbamoyl phosphate is bound by residues Arg-55 and Thr-56. Position 83 (Lys-83) interacts with L-aspartate. The carbamoyl phosphate site is built by Arg-105, His-139, and Gln-142. Arg-172 and Arg-226 together coordinate L-aspartate. Residues Gly-267 and Pro-268 each coordinate carbamoyl phosphate.

The protein belongs to the aspartate/ornithine carbamoyltransferase superfamily. ATCase family. In terms of assembly, heterododecamer (2C3:3R2) of six catalytic PyrB chains organized as two trimers (C3), and six regulatory PyrI chains organized as three dimers (R2).

It carries out the reaction carbamoyl phosphate + L-aspartate = N-carbamoyl-L-aspartate + phosphate + H(+). It participates in pyrimidine metabolism; UMP biosynthesis via de novo pathway; (S)-dihydroorotate from bicarbonate: step 2/3. In terms of biological role, catalyzes the condensation of carbamoyl phosphate and aspartate to form carbamoyl aspartate and inorganic phosphate, the committed step in the de novo pyrimidine nucleotide biosynthesis pathway. The chain is Aspartate carbamoyltransferase catalytic subunit from Rhodococcus jostii (strain RHA1).